The chain runs to 840 residues: Translation initiation factor IF-2 (840 aa).

Positions 95-143 (RSPDEIEAERQRELEEQRAAEEAERLKAEEAAARQRAEEEARKAEEAAR) are enriched in basic and acidic residues. Disordered regions lie at residues 95-155 (RSPD…ATAG) and 173-256 (PAAV…PTGP). Low complexity predominate over residues 144–155 (AKAAQEAAATAG). Composition is skewed to basic and acidic residues over residues 175-191 (AVEE…PKRD) and 223-232 (STDEESDGYR). The segment covering 233 to 247 (RGGRGGKSKLKKRNQ) has biased composition (basic residues). One can recognise a tr-type G domain in the interval 340–509 (TRAPVVTVMG…LLQAEVLELK (170 aa)). Residues 349–356 (GHVDHGKT) form a G1 region. 349-356 (GHVDHGKT) provides a ligand contact to GTP. The G2 stretch occupies residues 374 to 378 (GITQH). The segment at 395–398 (DTPG) is G3. GTP contacts are provided by residues 395-399 (DTPGH) and 449-452 (NKID). Residues 449-452 (NKID) are G4. The tract at residues 485–487 (SAK) is G5.

Belongs to the TRAFAC class translation factor GTPase superfamily. Classic translation factor GTPase family. IF-2 subfamily.

Its subcellular location is the cytoplasm. One of the essential components for the initiation of protein synthesis. Protects formylmethionyl-tRNA from spontaneous hydrolysis and promotes its binding to the 30S ribosomal subunits. Also involved in the hydrolysis of GTP during the formation of the 70S ribosomal complex. The protein is Translation initiation factor IF-2 of Pseudomonas aeruginosa (strain ATCC 15692 / DSM 22644 / CIP 104116 / JCM 14847 / LMG 12228 / 1C / PRS 101 / PAO1).